The primary structure comprises 73 residues: UPF0352 protein APL_0584 (73 aa).

The protein belongs to the UPF0352 family.

This Actinobacillus pleuropneumoniae serotype 5b (strain L20) protein is UPF0352 protein APL_0584.